Here is a 2789-residue protein sequence, read N- to C-terminus: Multiple epidermal growth factor-like domains protein 8 (2789 aa).

The N-terminal stretch at 1-27 is a signal peptide; that stretch reads MALGGALALALALALAVLGPLSLRVLA. Residues 28-2591 are Extracellular-facing; that stretch reads GDCKGQRQVL…FFRQDQAHID (2564 aa). Cystine bridges form between Cys30/Cys57, Cys142/Cys152, Cys146/Cys158, Cys174/Cys184, Cys178/Cys191, and Cys193/Cys202. A CUB 1 domain is found at 30–140; it reads CKGQRQVLRE…LGFNASFRFS (111 aa). N-linked (GlcNAc...) asparagine glycosylation is present at Asn50. EGF-like domains follow at residues 138 to 168 and 170 to 203; these read RFSLCPGGCQNHGQCKSPGVCVCEPGWGGPD and GLQECSAYCGSHGTCASTLGPCRCEPGFLGRACD. Kelch repeat units lie at residues 241–287, 290–338, 346–399, 402–453, 459–511, and 525–575; these read LLAV…AVAW, LLVL…AGHA, WLYV…FHAP, TLLV…FHTA, YMVV…APPS, and VLLV…SRDP. PSI domains follow at residues 561-613, 847-899, and 900-947; these read YCSM…SDCQ, ACTS…ALCP, and LCEE…EECP. N-linked (GlcNAc...) asparagine glycosylation is present at Asn1048. The 42-residue stretch at 1074 to 1115 folds into the EGF-like 3; calcium-binding domain; the sequence is DVDECRLGLARCHPRATCLNTPLSYECHCQRGYQGDGITHCN. Cystine bridges form between Cys1078–Cys1091, Cys1085–Cys1100, Cys1102–Cys1114, Cys1163–Cys1171, Cys1165–Cys1179, Cys1182–Cys1191, Cys1194–Cys1208, Cys1211–Cys1224, Cys1213–Cys1231, Cys1233–Cys1242, Cys1245–Cys1259, Cys1263–Cys1302, Cys1336–Cys1367, Cys1407–Cys1421, Cys1415–Cys1433, and Cys1435–Cys1444. 2 consecutive Laminin EGF-like domains span residues 1163–1210 and 1211–1261; these read CGCS…GCRP and CQCN…SCFR. An N-linked (GlcNAc...) asparagine glycan is attached at Asn1226. Positions 1263 to 1405 constitute a CUB 2 domain; the sequence is CGGRALLTNV…WGFNASVGSA (143 aa). Asn1271 carries N-linked (GlcNAc...) asparagine glycosylation. Thr1353 carries the phosphothreonine modification. The EGF-like 4 domain occupies 1403 to 1445; that stretch reads GSARCGSGGPGSCPVPQECVPQDGAAGAGLCRCPQGWAGPHCR. 6 Kelch repeats span residues 1522-1570, 1580-1629, 1632-1679, 1685-1735, 1740-1787, and 1796-1841; these read TLWM…SFHA, AMYL…TARR, SLLL…SAVY, SLYV…HASA, TMVV…ESVA, and RLYI…WCHG. 4 PSI domains span residues 1820 to 1860, 1868 to 1923, 2004 to 2062, and 2064 to 2121; these read PCRL…PPCS, ECRR…NDCR, PCHL…ESCS, and GCAQ…LSCP. Asn2010 carries N-linked (GlcNAc...) asparagine glycosylation. The EGF-like 5 domain maps to 2122 to 2160; it reads PEDECANGHHDCNETQNCHDQPHGYECSCKTGYTMDNVT. Intrachain disulfides connect Cys2126/Cys2139 and Cys2133/Cys2148. 2 N-linked (GlcNAc...) asparagine glycosylation sites follow: Asn2158 and Asn2173. 8 disulfides stabilise this stretch: Cys2197/Cys2205, Cys2199/Cys2214, Cys2217/Cys2226, Cys2229/Cys2243, Cys2324/Cys2333, Cys2326/Cys2341, Cys2343/Cys2368, and Cys2371/Cys2385. Laminin EGF-like domains follow at residues 2197–2245 and 2324–2387; these read CRCN…TCRP and CQCN…QCYR. The interval 2468-2508 is disordered; it reads VHIQPPPPPPPPPPPADGVPRVAADLGGLGTGSGSGSPVEP. Residues 2471–2484 show a composition bias toward pro residues; it reads QPPPPPPPPPPPAD. A helical transmembrane segment spans residues 2592–2612; it reads LFVFFSVFFSCFFLFLSLCVL. Residues 2613–2789 lie on the Cytoplasmic side of the membrane; it reads LWKAKQALDQ…SQDNLTSMSL (177 aa). Gly residues predominate over residues 2762–2776; the sequence is GGAGGSGHGGGGGRK. A disordered region spans residues 2762–2789; the sequence is GGAGGSGHGGGGGRKGLLSQDNLTSMSL. A compositionally biased stretch (polar residues) spans 2780 to 2789; that stretch reads SQDNLTSMSL.

In terms of tissue distribution, highest expression in brain, testis and kidney.

The protein localises to the membrane. In terms of biological role, acts as a negative regulator of hedgehog signaling. The chain is Multiple epidermal growth factor-like domains protein 8 (Megf8) from Mus musculus (Mouse).